Here is a 227-residue protein sequence, read N- to C-terminus: Cytochrome c oxidase subunit 2 (227 aa).

Over 1–14 (MAYPMQLGLQDATS) the chain is Mitochondrial intermembrane. A helical transmembrane segment spans residues 15-45 (PIMEELTDFHDHTLMIVFLISTLVLYIISLM). Topologically, residues 46–59 (LTTKLTHTNTMDAQ) are mitochondrial matrix. A helical transmembrane segment spans residues 60-87 (EVETVWTILPAIILIMIALPSLRILYMM). Residues 88–227 (DEINDPYLTV…QFESWTSSMT (140 aa)) are Mitochondrial intermembrane-facing. Cu cation-binding residues include H161, C196, E198, C200, H204, and M207. Residue E198 coordinates Mg(2+).

This sequence belongs to the cytochrome c oxidase subunit 2 family. As to quaternary structure, component of the cytochrome c oxidase (complex IV, CIV), a multisubunit enzyme composed of 14 subunits. The complex is composed of a catalytic core of 3 subunits MT-CO1, MT-CO2 and MT-CO3, encoded in the mitochondrial DNA, and 11 supernumerary subunits COX4I, COX5A, COX5B, COX6A, COX6B, COX6C, COX7A, COX7B, COX7C, COX8 and NDUFA4, which are encoded in the nuclear genome. The complex exists as a monomer or a dimer and forms supercomplexes (SCs) in the inner mitochondrial membrane with NADH-ubiquinone oxidoreductase (complex I, CI) and ubiquinol-cytochrome c oxidoreductase (cytochrome b-c1 complex, complex III, CIII), resulting in different assemblies (supercomplex SCI(1)III(2)IV(1) and megacomplex MCI(2)III(2)IV(2)). Found in a complex with TMEM177, COA6, COX18, COX20, SCO1 and SCO2. Interacts with TMEM177 in a COX20-dependent manner. Interacts with COX20. Interacts with COX16. Requires Cu cation as cofactor.

It is found in the mitochondrion inner membrane. It catalyses the reaction 4 Fe(II)-[cytochrome c] + O2 + 8 H(+)(in) = 4 Fe(III)-[cytochrome c] + 2 H2O + 4 H(+)(out). Functionally, component of the cytochrome c oxidase, the last enzyme in the mitochondrial electron transport chain which drives oxidative phosphorylation. The respiratory chain contains 3 multisubunit complexes succinate dehydrogenase (complex II, CII), ubiquinol-cytochrome c oxidoreductase (cytochrome b-c1 complex, complex III, CIII) and cytochrome c oxidase (complex IV, CIV), that cooperate to transfer electrons derived from NADH and succinate to molecular oxygen, creating an electrochemical gradient over the inner membrane that drives transmembrane transport and the ATP synthase. Cytochrome c oxidase is the component of the respiratory chain that catalyzes the reduction of oxygen to water. Electrons originating from reduced cytochrome c in the intermembrane space (IMS) are transferred via the dinuclear copper A center (CU(A)) of subunit 2 and heme A of subunit 1 to the active site in subunit 1, a binuclear center (BNC) formed by heme A3 and copper B (CU(B)). The BNC reduces molecular oxygen to 2 water molecules using 4 electrons from cytochrome c in the IMS and 4 protons from the mitochondrial matrix. The chain is Cytochrome c oxidase subunit 2 (MT-CO2) from Cratogeomys castanops (Yellow-faced pocket gopher).